Here is a 370-residue protein sequence, read N- to C-terminus: tRNA-specific 2-thiouridylase MnmA (370 aa).

Residues 7–14 (GISGGVDS) and Met33 each bind ATP. Positions 104-106 (NPD) are interaction with target base in tRNA. Residue Cys109 is the Nucleophile of the active site. A disulfide bridge connects residues Cys109 and Cys208. ATP is bound at residue Gly134. An interaction with tRNA region spans residues 158–160 (KDQ). The active-site Cysteine persulfide intermediate is Cys208.

Belongs to the MnmA/TRMU family.

It localises to the cytoplasm. The catalysed reaction is S-sulfanyl-L-cysteinyl-[protein] + uridine(34) in tRNA + AH2 + ATP = 2-thiouridine(34) in tRNA + L-cysteinyl-[protein] + A + AMP + diphosphate + H(+). Functionally, catalyzes the 2-thiolation of uridine at the wobble position (U34) of tRNA, leading to the formation of s(2)U34. This is tRNA-specific 2-thiouridylase MnmA from Malacoplasma penetrans (strain HF-2) (Mycoplasma penetrans).